An 809-amino-acid chain; its full sequence is AP-3 complex subunit beta (809 aa).

HEAT repeat units lie at residues 37–76 (YYSQ…DDDS), 112–151 (DPNL…SSLA), 153–186 (IILH…AGKN), 187–224 (DYHE…DHLE), and 524–561 (KICP…YDID). Ser-693, Ser-698, Ser-724, and Ser-726 each carry phosphoserine. Disordered regions lie at residues 708–739 (FTSS…FTSQ) and 763–809 (PRKI…HLEL). Positions 722–739 (GDSNSISGKGNVNTFTSQ) are enriched in polar residues. Positions 772–791 (ESSDEDEDESEESSDDDEYS) are enriched in acidic residues. Residues 792 to 809 (DSSLGTSSSGTSSSHLEL) are compositionally biased toward low complexity.

It belongs to the adaptor complexes large subunit family. In terms of assembly, adaptor protein complex 3 (AP-3) is a heterotetramer composed of 2 large adaptins (APL5 and APL6), a medium adaptin (APM3) and a small adaptin (APS3). Post-translationally, pyrophosphorylated by 5-diphosphoinositol pentakisphosphate (5-IP7). Serine pyrophosphorylation is achieved by Mg(2+)-dependent, but enzyme independent transfer of a beta-phosphate from a inositol pyrophosphate to a pre-phosphorylated serine residue.

It localises to the golgi apparatus. Its subcellular location is the cytoplasmic vesicle. The protein resides in the clathrin-coated vesicle membrane. Its function is as follows. Part of the AP-3 complex, an adaptor-related complex which is not clathrin-associated. The complex is associated with the Golgi region as well as more peripheral structures. It facilitates the budding of vesicles from the Golgi membrane and may be directly involved in trafficking to the vacuole. Required for the transport via the ALP pathway, which directs the transport of the cargo proteins PHO8 and VAM3 to the vacuole. The sequence is that of AP-3 complex subunit beta (APL6) from Saccharomyces cerevisiae (strain ATCC 204508 / S288c) (Baker's yeast).